The following is a 230-amino-acid chain: Orotidine 5'-phosphate decarboxylase (230 aa).

Residues D11, K34, 61 to 70, T117, R179, Q188, G208, and R209 each bind substrate; that span reads DLKLHDIPNT. K63 acts as the Proton donor in catalysis.

This sequence belongs to the OMP decarboxylase family. Type 1 subfamily. Homodimer.

It carries out the reaction orotidine 5'-phosphate + H(+) = UMP + CO2. The protein operates within pyrimidine metabolism; UMP biosynthesis via de novo pathway; UMP from orotate: step 2/2. In terms of biological role, catalyzes the decarboxylation of orotidine 5'-monophosphate (OMP) to uridine 5'-monophosphate (UMP). The polypeptide is Orotidine 5'-phosphate decarboxylase (Streptococcus gordonii (strain Challis / ATCC 35105 / BCRC 15272 / CH1 / DL1 / V288)).